Consider the following 152-residue polypeptide: Probable flagellum biosynthesis repressor protein FlbT (152 aa).

This sequence belongs to the FlbT family.

Its function is as follows. Has a post-transcriptional repressor function in flagellum biogenesis. Associates with the 5'-UTR of fljK mRNA and promotes its degradation. In Brucella abortus (strain S19), this protein is Probable flagellum biosynthesis repressor protein FlbT.